Consider the following 190-residue polypeptide: Prostaglandin-H2 D-isomerase (190 aa).

The signal sequence occupies residues Met1–Ala22. O-linked (GalNAc...) serine glycosylation is present at Ser29. The N-linked (GlcNAc...) (complex) asparagine glycan is linked to Asn51. Cys65 (nucleophile) is an active-site residue. N-linked (GlcNAc...) (complex) asparagine glycosylation occurs at Asn78. Cys89 and Cys186 are disulfide-bonded.

Belongs to the calycin superfamily. Lipocalin family. In terms of assembly, monomer. In terms of processing, N- and O-glycosylated. Both N-glycosylation recognition sites are almost quantitatively occupied by N-glycans of the biantennary complex type, with a considerable proportion of structures bearing a bisecting GlcNAc. N-glycan at Asn-78: dHex1Hex5HexNAc4. Agalacto structure as well as sialylated and nonsialylated oligosaccharides bearing alpha2-3- and/or alpha2-6-linked NeuNAc are present. In terms of tissue distribution, abundant in the brain and CNS, where it is expressed in tissues of the blood-brain barrier and secreted into the cerebro-spinal fluid. Abundantly expressed in the heart. In the male reproductive system, it is expressed in the testis, epididymis and prostate, and is secreted into the seminal fluid. Expressed in the eye and secreted into the aqueous humor. Lower levels detected in various tissue fluids such as serum, normal urine, ascitic fluid and tear fluid. Also found in a number of other organs including ovary, fimbriae of the fallopian tubes, kidney, leukocytes.

It is found in the rough endoplasmic reticulum. Its subcellular location is the nucleus membrane. It localises to the golgi apparatus. The protein resides in the cytoplasm. The protein localises to the perinuclear region. It is found in the secreted. It catalyses the reaction prostaglandin H2 = prostaglandin D2. In terms of biological role, catalyzes the conversion of PGH2 to PGD2, a prostaglandin involved in smooth muscle contraction/relaxation and a potent inhibitor of platelet aggregation. Involved in a variety of CNS functions, such as sedation, NREM sleep and PGE2-induced allodynia, and may have an anti-apoptotic role in oligodendrocytes. Binds small non-substrate lipophilic molecules, including biliverdin, bilirubin, retinal, retinoic acid and thyroid hormone, and may act as a scavenger for harmful hydrophobic molecules and as a secretory retinoid and thyroid hormone transporter. Possibly involved in development and maintenance of the blood-brain, blood-retina, blood-aqueous humor and blood-testis barrier. It is likely to play important roles in both maturation and maintenance of the central nervous system and male reproductive system. Involved in PLA2G3-dependent maturation of mast cells. PLA2G3 is secreted by immature mast cells and acts on nearby fibroblasts upstream to PTDGS to synthesize PGD2, which in turn promotes mast cell maturation and degranulation via PTGDR. The protein is Prostaglandin-H2 D-isomerase (PTGDS) of Homo sapiens (Human).